Here is a 404-residue protein sequence, read N- to C-terminus: Cysteine desulfurase IscS (404 aa).

Pyridoxal 5'-phosphate is bound by residues 75–76 (AT), N155, Q183, and 203–205 (SGH). K206 is subject to N6-(pyridoxal phosphate)lysine. Pyridoxal 5'-phosphate is bound at residue T243. Residue C328 is the Cysteine persulfide intermediate of the active site. Residue C328 coordinates [2Fe-2S] cluster.

Belongs to the class-V pyridoxal-phosphate-dependent aminotransferase family. NifS/IscS subfamily. Homodimer. Forms a heterotetramer with IscU, interacts with other sulfur acceptors. Pyridoxal 5'-phosphate serves as cofactor.

The protein resides in the cytoplasm. It catalyses the reaction (sulfur carrier)-H + L-cysteine = (sulfur carrier)-SH + L-alanine. It participates in cofactor biosynthesis; iron-sulfur cluster biosynthesis. Functionally, master enzyme that delivers sulfur to a number of partners involved in Fe-S cluster assembly, tRNA modification or cofactor biosynthesis. Catalyzes the removal of elemental sulfur atoms from cysteine to produce alanine. Functions as a sulfur delivery protein for Fe-S cluster synthesis onto IscU, an Fe-S scaffold assembly protein, as well as other S acceptor proteins. This is Cysteine desulfurase IscS from Serratia proteamaculans (strain 568).